Reading from the N-terminus, the 420-residue chain is Phosphoribosylamine--glycine ligase (420 aa).

An ATP-grasp domain is found at 108 to 314 (KQFMEKYAIP…FAALIDALLH (207 aa)). 134–195 (LNERGVPIVI…EDFLAGEEFS (62 aa)) contacts ATP. Mg(2+)-binding residues include Glu284 and Asn286.

It belongs to the GARS family. The cofactor is Mg(2+). Mn(2+) serves as cofactor.

It carries out the reaction 5-phospho-beta-D-ribosylamine + glycine + ATP = N(1)-(5-phospho-beta-D-ribosyl)glycinamide + ADP + phosphate + H(+). It participates in purine metabolism; IMP biosynthesis via de novo pathway; N(1)-(5-phospho-D-ribosyl)glycinamide from 5-phospho-alpha-D-ribose 1-diphosphate: step 2/2. The sequence is that of Phosphoribosylamine--glycine ligase from Listeria monocytogenes serovar 1/2a (strain ATCC BAA-679 / EGD-e).